A 408-amino-acid chain; its full sequence is UPF0761 membrane protein NMCC_0461 (408 aa).

A run of 6 helical transmembrane segments spans residues 43 to 63 (LLAL…FPVF), 100 to 120 (LTAI…RTID), 139 to 159 (FLVY…GISF), 176 to 196 (WSGA…LWGL), 210 to 230 (AFVG…LFTW), and 248 to 268 (VPFF…GAVL).

The protein belongs to the UPF0761 family.

It localises to the cell inner membrane. The sequence is that of UPF0761 membrane protein NMCC_0461 from Neisseria meningitidis serogroup C (strain 053442).